Here is a 259-residue protein sequence, read N- to C-terminus: Imidazole glycerol phosphate synthase subunit HisF (259 aa).

Catalysis depends on residues aspartate 11 and aspartate 130.

It belongs to the HisA/HisF family. Heterodimer of HisH and HisF.

Its subcellular location is the cytoplasm. It carries out the reaction 5-[(5-phospho-1-deoxy-D-ribulos-1-ylimino)methylamino]-1-(5-phospho-beta-D-ribosyl)imidazole-4-carboxamide + L-glutamine = D-erythro-1-(imidazol-4-yl)glycerol 3-phosphate + 5-amino-1-(5-phospho-beta-D-ribosyl)imidazole-4-carboxamide + L-glutamate + H(+). Its pathway is amino-acid biosynthesis; L-histidine biosynthesis; L-histidine from 5-phospho-alpha-D-ribose 1-diphosphate: step 5/9. Its function is as follows. IGPS catalyzes the conversion of PRFAR and glutamine to IGP, AICAR and glutamate. The HisF subunit catalyzes the cyclization activity that produces IGP and AICAR from PRFAR using the ammonia provided by the HisH subunit. This Desulforapulum autotrophicum (strain ATCC 43914 / DSM 3382 / VKM B-1955 / HRM2) (Desulfobacterium autotrophicum) protein is Imidazole glycerol phosphate synthase subunit HisF.